Reading from the N-terminus, the 321-residue chain is Transcription factor MYB60 (321 aa).

HTH myb-type domains are found at residues lysine 9 to isoleucine 65 and lysine 66 to isoleucine 116. DNA-binding regions (H-T-H motif) lie at residues tryptophan 37 to leucine 61 and tryptophan 89 to leucine 112. S-nitrosocysteine occurs at positions 49 and 53. 2 disordered regions span residues serine 196–isoleucine 215 and histidine 263–histidine 291. The span at glutamine 206–isoleucine 215 shows a compositional bias: polar residues. The span at serine 273–lysine 290 shows a compositional bias: basic and acidic residues.

As to expression, restricted to stomatal guard cells. Mostly expressed in leaves, cotyledons, hypocotyls, seeds and ripened berry skins.

It localises to the nucleus. In terms of biological role, transcription factor involved in the regulation of gene (e.g. drought-regulated and flavonoid biosynthetic genes) expression and stomatal movements leading to negative regulation of responses to drought and responses to other physiological stimuli (e.g. light). The protein is Transcription factor MYB60 of Vitis vinifera (Grape).